The sequence spans 1070 residues: Error-prone DNA polymerase (1070 aa).

It belongs to the DNA polymerase type-C family. DnaE2 subfamily.

It is found in the cytoplasm. The catalysed reaction is DNA(n) + a 2'-deoxyribonucleoside 5'-triphosphate = DNA(n+1) + diphosphate. In terms of biological role, DNA polymerase involved in damage-induced mutagenesis and translesion synthesis (TLS). It is not the major replicative DNA polymerase. This is Error-prone DNA polymerase from Aromatoleum aromaticum (strain DSM 19018 / LMG 30748 / EbN1) (Azoarcus sp. (strain EbN1)).